The following is a 149-amino-acid chain: Heavy metal-associated isoprenylated plant protein 21 (149 aa).

The 64-residue stretch at 25–88 (LQTVDIKVKM…RVKSTGKKAE (64 aa)) folds into the HMA domain. A metal cation-binding residues include Cys36 and Cys39. Cys146 bears the Cysteine methyl ester mark. The S-farnesyl cysteine moiety is linked to residue Cys146. Residues 147–149 (SIM) constitute a propeptide, removed in mature form.

The protein belongs to the HIPP family. As to quaternary structure, interacts with ZHD11/HB29. As to expression, expressed at low levels in leaves and sepals.

The protein localises to the membrane. Heavy-metal-binding protein. Binds cadmium. May be involved in cadmium transport and play a role in cadmium detoxification. The polypeptide is Heavy metal-associated isoprenylated plant protein 21 (Arabidopsis thaliana (Mouse-ear cress)).